The following is a 152-amino-acid chain: Fibroblast growth factor 1 (152 aa).

A2 is modified (N-acetylalanine). Residues 2 to 15 (AEGEITTFTALTEK) constitute a propeptide that is removed on maturation. N33 contacts heparin. The heparin-binding stretch occupies residues 127-143 (KKNGSCKRGPRTHYGQK).

The protein belongs to the heparin-binding growth factors family. Monomer. Homodimer. Interacts with FGFR1, FGFR2, FGFR3 and FGFR4. Affinity between fibroblast growth factors (FGFs) and their receptors is increased by heparan sulfate glycosaminoglycans that function as coreceptors. Found in a complex with FGFBP1, FGF1 and FGF2. Interacts with FGFBP1. Part of a Cu(2+)-dependent multiprotein aggregate containing FGF1, S100A13 and SYT1. Interacts with SYT1. Interacts with S100A13. Interacts with LRRC59. Interacts with CSNKA, CSNKB and FIBP. While binding with LRRC59, CSNKA and FIBP seem mutually exclusive, CSNKB and FIBP may cooperatively interact with FGF1. Forms a ternary complex with FGFR1 and ITGAV:ITGB3 and induces the recruitment of PTPN11 to the complex. In the nucleus, phosphorylated by PKC/PRKCD.

It localises to the secreted. The protein resides in the cytoplasm. Its subcellular location is the cell cortex. The protein localises to the cytosol. It is found in the nucleus. In terms of biological role, plays an important role in the regulation of cell survival, cell division, angiogenesis, cell differentiation and cell migration. Functions as a potent mitogen in vitro. Acts as a ligand for FGFR1 and integrins. Binds to FGFR1 in the presence of heparin leading to FGFR1 dimerization and activation via sequential autophosphorylation on tyrosine residues which act as docking sites for interacting proteins, leading to the activation of several signaling cascades. Binds to integrin ITGAV:ITGB3. Its binding to integrin, subsequent ternary complex formation with integrin and FGFR1, and the recruitment of PTPN11 to the complex are essential for FGF1 signaling. Induces the phosphorylation and activation of FGFR1, FRS2, MAPK3/ERK1, MAPK1/ERK2 and AKT1. Can induce angiogenesis. The protein is Fibroblast growth factor 1 (FGF1) of Sus scrofa (Pig).